The chain runs to 294 residues: MTARIIDGKIIAADLRAQVAREVERVKHDLGLTPGLAVVLVGNDPASEVYVRSKHTQTQAAGMASFEHKLPADVAQAELLALISKLNQDPSVHGILVQLPLPKGLDTEAVINAIDPAKDVDGLHPHNAGRLAGGQPALAPCTPLGCIILSKTVHASLEGMNAIVIGRSNLVGRPLVQLLLNENATVTIAHSRSRDLPALTARADLVYAAVGRPEMVKRDWIKPGATVIDVGINRIPTPEGKTRLVGDVAYAEVAEVAGAITPVPGGVGQMTVACLLVNTLRAACAIAGLPKPSV.

Residues 166-168, S191, and I232 contribute to the NADP(+) site; that span reads GRS.

This sequence belongs to the tetrahydrofolate dehydrogenase/cyclohydrolase family. In terms of assembly, homodimer.

It carries out the reaction (6R)-5,10-methylene-5,6,7,8-tetrahydrofolate + NADP(+) = (6R)-5,10-methenyltetrahydrofolate + NADPH. The enzyme catalyses (6R)-5,10-methenyltetrahydrofolate + H2O = (6R)-10-formyltetrahydrofolate + H(+). The protein operates within one-carbon metabolism; tetrahydrofolate interconversion. Functionally, catalyzes the oxidation of 5,10-methylenetetrahydrofolate to 5,10-methenyltetrahydrofolate and then the hydrolysis of 5,10-methenyltetrahydrofolate to 10-formyltetrahydrofolate. In Bradyrhizobium sp. (strain ORS 278), this protein is Bifunctional protein FolD.